The primary structure comprises 185 residues: Ribosome-recycling factor (185 aa).

Belongs to the RRF family.

It is found in the cytoplasm. Responsible for the release of ribosomes from messenger RNA at the termination of protein biosynthesis. May increase the efficiency of translation by recycling ribosomes from one round of translation to another. The sequence is that of Ribosome-recycling factor from Macrococcus caseolyticus (strain JCSC5402) (Macrococcoides caseolyticum).